The chain runs to 179 residues: Large ribosomal subunit protein uL5 (179 aa).

The protein belongs to the universal ribosomal protein uL5 family. In terms of assembly, part of the 50S ribosomal subunit; part of the 5S rRNA/L5/L18/L25 subcomplex. Contacts the 5S rRNA and the P site tRNA. Forms a bridge to the 30S subunit in the 70S ribosome.

In terms of biological role, this is one of the proteins that bind and probably mediate the attachment of the 5S RNA into the large ribosomal subunit, where it forms part of the central protuberance. In the 70S ribosome it contacts protein S13 of the 30S subunit (bridge B1b), connecting the 2 subunits; this bridge is implicated in subunit movement. Contacts the P site tRNA; the 5S rRNA and some of its associated proteins might help stabilize positioning of ribosome-bound tRNAs. This is Large ribosomal subunit protein uL5 from Rickettsia rickettsii (strain Iowa).